The primary structure comprises 63 residues: Large ribosomal subunit protein bL32c (63 aa).

The disordered stretch occupies residues 38 to 63 (RSFSGVSEHPKPKGFSRQQTNNRVLG). Polar residues predominate over residues 53–63 (SRQQTNNRVLG).

The protein belongs to the bacterial ribosomal protein bL32 family.

The protein localises to the plastid. It is found in the chloroplast. In Oryza sativa (Rice), this protein is Large ribosomal subunit protein bL32c (rpl32).